The following is a 157-amino-acid chain: 2-C-methyl-D-erythritol 2,4-cyclodiphosphate synthase (157 aa).

Positions 8, 10, and 42 each coordinate a divalent metal cation. Residue 8–10 (DVH) coordinates 4-CDP-2-C-methyl-D-erythritol 2-phosphate. 4-CDP-2-C-methyl-D-erythritol 2-phosphate-binding positions include 56 to 58 (DIG), 132 to 135 (STSE), Phe139, and Arg142.

The protein belongs to the IspF family. As to quaternary structure, homotrimer. The cofactor is a divalent metal cation.

It carries out the reaction 4-CDP-2-C-methyl-D-erythritol 2-phosphate = 2-C-methyl-D-erythritol 2,4-cyclic diphosphate + CMP. It participates in isoprenoid biosynthesis; isopentenyl diphosphate biosynthesis via DXP pathway; isopentenyl diphosphate from 1-deoxy-D-xylulose 5-phosphate: step 4/6. Its function is as follows. Involved in the biosynthesis of isopentenyl diphosphate (IPP) and dimethylallyl diphosphate (DMAPP), two major building blocks of isoprenoid compounds. Catalyzes the conversion of 4-diphosphocytidyl-2-C-methyl-D-erythritol 2-phosphate (CDP-ME2P) to 2-C-methyl-D-erythritol 2,4-cyclodiphosphate (ME-CPP) with a corresponding release of cytidine 5-monophosphate (CMP). The protein is 2-C-methyl-D-erythritol 2,4-cyclodiphosphate synthase of Dehalococcoides mccartyi (strain ATCC BAA-2266 / KCTC 15142 / 195) (Dehalococcoides ethenogenes (strain 195)).